Here is a 110-residue protein sequence, read N- to C-terminus: UPF0060 membrane protein Rpic_4131 (110 aa).

A run of 4 helical transmembrane segments spans residues 8–28 (VLFAFTAVAEIVGCYLPWLVL), 33–53 (PFWLLLPAAASLALFAWLLTL), 65–85 (YGGVYIAVALVWLRLVDGVAL), and 88–108 (WDVGGAAIALTGMAVIALQPQ).

The protein belongs to the UPF0060 family.

It is found in the cell inner membrane. This Ralstonia pickettii (strain 12J) protein is UPF0060 membrane protein Rpic_4131.